The sequence spans 182 residues: MNKLTTKLVVAIGIGAALYGVLGLWGFSIAPNTFIKPALAILTVFGALFGPVAGLLIGLIGHTVTDTIAGWGIWWGWVISSGIIGLAMGLIQKRVGFSVKHGTYNNRDISYFTIAGLIGIVIAIIFAGSFDIIVMGEPFDKIVIQVLGATIADVIVFLVLGLPITIGLAKSNRKHTHLKIEK.

The next 5 membrane-spanning stretches (helical) occupy residues 9-29 (VVAI…GFSI), 40-60 (AILT…IGLI), 71-91 (WGIW…MGLI), 114-134 (IAGL…DIIV), and 142-162 (IVIQ…VLGL).

Belongs to the UPF0397 family.

The protein resides in the cell membrane. The chain is UPF0397 protein BcerKBAB4_2500 from Bacillus mycoides (strain KBAB4) (Bacillus weihenstephanensis).